The sequence spans 624 residues: Ferredoxin-fold anticodon-binding domain-containing protein 1 (624 aa).

One can recognise an FDX-ACB domain in the interval 531-624; sequence LYPPCYVHDV…IQQHLYVIPR (94 aa).

The sequence is that of Ferredoxin-fold anticodon-binding domain-containing protein 1 (FDXACB1) from Homo sapiens (Human).